We begin with the raw amino-acid sequence, 436 residues long: 3-phosphoshikimate 1-carboxyvinyltransferase (436 aa).

3-phosphoshikimate-binding residues include lysine 23, serine 24, and arginine 28. Residue lysine 23 participates in phosphoenolpyruvate binding. Glycine 97 and arginine 126 together coordinate phosphoenolpyruvate. 3-phosphoshikimate-binding residues include serine 171, glutamine 173, aspartate 323, and lysine 350. Glutamine 173 provides a ligand contact to phosphoenolpyruvate. Aspartate 323 serves as the catalytic Proton acceptor. Phosphoenolpyruvate contacts are provided by arginine 354 and arginine 396.

The protein belongs to the EPSP synthase family. Monomer.

The protein localises to the cytoplasm. It catalyses the reaction 3-phosphoshikimate + phosphoenolpyruvate = 5-O-(1-carboxyvinyl)-3-phosphoshikimate + phosphate. Its pathway is metabolic intermediate biosynthesis; chorismate biosynthesis; chorismate from D-erythrose 4-phosphate and phosphoenolpyruvate: step 6/7. Its function is as follows. Catalyzes the transfer of the enolpyruvyl moiety of phosphoenolpyruvate (PEP) to the 5-hydroxyl of shikimate-3-phosphate (S3P) to produce enolpyruvyl shikimate-3-phosphate and inorganic phosphate. The protein is 3-phosphoshikimate 1-carboxyvinyltransferase of Prochlorococcus marinus (strain AS9601).